The primary structure comprises 220 residues: tRNA (guanine-N(7)-)-methyltransferase (220 aa).

4 residues coordinate S-adenosyl-L-methionine: Glu46, Asp71, Asp100, and Asp122. Residue Asp122 is part of the active site. Residues Lys126, Asp158, and 196–199 (TEYE) each bind substrate.

This sequence belongs to the class I-like SAM-binding methyltransferase superfamily. TrmB family.

It catalyses the reaction guanosine(46) in tRNA + S-adenosyl-L-methionine = N(7)-methylguanosine(46) in tRNA + S-adenosyl-L-homocysteine. It participates in tRNA modification; N(7)-methylguanine-tRNA biosynthesis. In terms of biological role, catalyzes the formation of N(7)-methylguanine at position 46 (m7G46) in tRNA. The sequence is that of tRNA (guanine-N(7)-)-methyltransferase from Malacoplasma penetrans (strain HF-2) (Mycoplasma penetrans).